A 236-amino-acid polypeptide reads, in one-letter code: Nopaline transport system permease protein NocQ (236 aa).

The ABC transmembrane type-1 domain occupies 21–222 (AMMTVVVAAC…LLSSVSNRGF (202 aa)). The next 4 membrane-spanning stretches (helical) occupy residues 25 to 45 (VVVA…FAAA), 63 to 83 (VVRG…GGTL), 102 to 122 (IFVI…TEVI), and 199 to 219 (QPFT…SVSN).

This sequence belongs to the binding-protein-dependent transport system permease family. HisMQ subfamily.

Its subcellular location is the cell inner membrane. Component of the nopaline active transport system probably consisting of four subunits: Q, M, P and T. This system is also capable of transporting octopine provided that catabolic functions are induced with nopaline. This chain is Nopaline transport system permease protein NocQ (nocQ), found in Agrobacterium fabrum (strain C58 / ATCC 33970) (Agrobacterium tumefaciens (strain C58)).